A 630-amino-acid chain; its full sequence is Mitochondrial Rho GTPase 1 (630 aa).

In terms of domain architecture, Miro 1 spans 1–168; sequence MKEVRVVICG…FYMCRACVIY (168 aa). The Cytoplasmic segment spans residues 1-598; it reads MKEVRVVICG…EEDSNKTNYQ (598 aa). Residues 10–17, 57–61, and 113–116 each bind GTP; these read GDQGVGKS, DTQSD, and NKSE. 2 EF-hand domains span residues 184 to 219 and 304 to 339; these read ATIH…CFSK and KGYR…TPGL. The Ca(2+) site is built by aspartate 197, asparagine 199, aspartate 201, glutamate 208, aspartate 317, aspartate 319, aspartate 321, and glutamate 328. Residues 419–579 form the Miro 2 domain; it reads RNVFLCFVVG…FIQLAESAQY (161 aa). Residues 428-435, 459-463, and 527-530 each bind GTP; these read GSKSCGKT, EFQST, and TKAD. A helical; Anchor for type IV membrane protein membrane pass occupies residues 599–619; that stretch reads LVAALTAFGALLLSVGGSLTW. Over 620–630 the chain is Mitochondrial intermembrane; that stretch reads KIIKHQYYSKK.

Belongs to the mitochondrial Rho GTPase family.

The protein localises to the mitochondrion outer membrane. Its function is as follows. Mitochondrial GTPase involved in mitochondrial trafficking. Probably involved in control of anterograde transport of mitochondria and their subcellular distribution. The sequence is that of Mitochondrial Rho GTPase 1 (gem1) from Schizosaccharomyces pombe (strain 972 / ATCC 24843) (Fission yeast).